A 423-amino-acid chain; its full sequence is tRNA(Ile2) 2-agmatinylcytidine synthetase TiaS (423 aa).

Residues 273–347 constitute a DNA-binding region (OB); that stretch reads VIVYGRVVEE…GINIEKIKIL (75 aa).

This sequence belongs to the TiaS family.

The protein localises to the cytoplasm. It catalyses the reaction cytidine(34) in tRNA(Ile2) + agmatine + ATP + H2O = 2-agmatinylcytidine(34) in tRNA(Ile2) + AMP + 2 phosphate + 2 H(+). Its function is as follows. ATP-dependent agmatine transferase that catalyzes the formation of 2-agmatinylcytidine (agm2C) at the wobble position (C34) of tRNA(Ile2), converting the codon specificity from AUG to AUA. This Methanocaldococcus jannaschii (strain ATCC 43067 / DSM 2661 / JAL-1 / JCM 10045 / NBRC 100440) (Methanococcus jannaschii) protein is tRNA(Ile2) 2-agmatinylcytidine synthetase TiaS.